The sequence spans 285 residues: RNA polymerase sigma factor RpoH (285 aa).

Residues 53-122 (LILSHLRFVV…IHEYVLRNWR (70 aa)) form a sigma-70 factor domain-2 region. The Interaction with polymerase core subunit RpoC motif lies at 77–80 (DLVQ). A sigma-70 factor domain-4 region spans residues 229–280 (ALASLDERSQHIVRSRWLDDDKATLQDLAEMYGVSAERIRQLEKNAMKKLKM). Residues 253-272 (LQDLAEMYGVSAERIRQLEK) constitute a DNA-binding region (H-T-H motif).

It belongs to the sigma-70 factor family. RpoH subfamily. Interacts with the RNA polymerase core enzyme.

It localises to the cytoplasm. Functionally, sigma factors are initiation factors that promote the attachment of RNA polymerase to specific initiation sites and are then released. This sigma factor is involved in regulation of expression of heat shock genes. This chain is RNA polymerase sigma factor RpoH, found in Vibrio vulnificus (strain CMCP6).